The primary structure comprises 598 residues: Protein unc-93 homolog B1 (598 aa).

A disordered region spans residues 1–36; the sequence is MEVEPPLYPVAGAAGPQGDEDRHGVPDGPEAPLDEL. Transmembrane regions (helical) follow at residues 64–84, 110–130, 132–152, 160–180, and 223–243; these read VLAA…LLQM, KMLM…PVLI, FFGT…FVST, TLVP…ASMG, and IFYS…IYFL. 2 N-linked (GlcNAc...) asparagine glycosylation sites follow: Asn251 and Asn272. 5 consecutive transmembrane segments (helical) span residues 285–305, 343–363, 378–398, 403–423, and 428–448; these read LIVV…MVLG, LVPF…GFAL, LLIA…LGLW, VPLV…FFWA, and VLQH…GSAL. N-linked (GlcNAc...) asparagine glycosylation is present at Asn449. Helical transmembrane passes span 469–489 and 495–515; these read FIFT…YLGS and AKLA…LWME. The tract at residues 524–598 is disordered; that stretch reads PRQPRIPKPQ…ALGGDGPEEQ (75 aa). Residues 544 to 554 show a composition bias toward acidic residues; the sequence is EDNSDESDMEG. Phosphoserine occurs at positions 547 and 550.

This sequence belongs to the unc-93 family. As to quaternary structure, interacts with TLR3, TLR5, TLR7, TLR8, TLR9 and TLR13 (probably via transmembrane domain). Post-translationally, N-glycosylated.

The protein localises to the endoplasmic reticulum membrane. It localises to the endosome. It is found in the lysosome. The protein resides in the cytoplasmic vesicle. Its subcellular location is the phagosome. Functionally, plays an important role in innate and adaptive immunity by regulating nucleotide-sensing Toll-like receptor (TLR) signaling. Required for the transport of a subset of TLRs (including TLR3, TLR7 and TLR9) from the endoplasmic reticulum to endolysosomes where they can engage pathogen nucleotides and activate signaling cascades. May play a role in autoreactive B-cells removal. In Mus musculus (Mouse), this protein is Protein unc-93 homolog B1.